A 442-amino-acid polypeptide reads, in one-letter code: D-serine dehydratase (442 aa).

Position 118 is an N6-(pyridoxal phosphate)lysine (K118).

It belongs to the serine/threonine dehydratase family. DsdA subfamily. In terms of assembly, monomer. The cofactor is pyridoxal 5'-phosphate.

The catalysed reaction is D-serine = pyruvate + NH4(+). In Shigella flexneri, this protein is D-serine dehydratase.